The sequence spans 225 residues: Pathogenesis-related 5 protein Jun a 3.0101 (225 aa).

A signal peptide spans 1 to 26 (MARVSELAFLLAATLAISLHMQEAGV). Disulfide bonds link Cys35–Cys224, Cys76–Cys86, Cys91–Cys97, Cys139–Cys213, Cys144–Cys197, Cys152–Cys162, Cys166–Cys175, and Cys176–Cys184. IgE-binding stretches follow at residues 146–157 (ADINAVCPSELK), 158–170 (VDGGCNSACNVFK), and 178–191 (NAYVDNCPATNYSK).

It belongs to the thaumatin family. In terms of tissue distribution, expressed in pollen (at protein level).

The sequence is that of Pathogenesis-related 5 protein Jun a 3.0101 from Juniperus ashei (Ozark white cedar).